A 127-amino-acid chain; its full sequence is Aspartate 1-decarboxylase (127 aa).

Ser-25 functions as the Schiff-base intermediate with substrate; via pyruvic acid in the catalytic mechanism. Ser-25 is modified (pyruvic acid (Ser)). Position 57 (Thr-57) interacts with substrate. The active-site Proton donor is the Tyr-58. 73-75 (GAA) contacts substrate.

It belongs to the PanD family. Heterooctamer of four alpha and four beta subunits. Pyruvate serves as cofactor. In terms of processing, is synthesized initially as an inactive proenzyme, which is activated by self-cleavage at a specific serine bond to produce a beta-subunit with a hydroxyl group at its C-terminus and an alpha-subunit with a pyruvoyl group at its N-terminus.

The protein localises to the cytoplasm. It carries out the reaction L-aspartate + H(+) = beta-alanine + CO2. It functions in the pathway cofactor biosynthesis; (R)-pantothenate biosynthesis; beta-alanine from L-aspartate: step 1/1. Its function is as follows. Catalyzes the pyruvoyl-dependent decarboxylation of aspartate to produce beta-alanine. In Neisseria gonorrhoeae (strain ATCC 700825 / FA 1090), this protein is Aspartate 1-decarboxylase.